A 418-amino-acid chain; its full sequence is Beta-arrestin-1 (418 aa).

The segment at 1–163 is interaction with SRC; that stretch reads MGDKGTRVFK…LEEKIHKRNS (163 aa). Residues 45–86 are interaction with CHRM2; the sequence is PEYLKERRVYVTLTCAFRYGREDLDVLGLTFRKDLFVANVQS. Phosphotyrosine is present on Y47. Positions 250, 255, 324, and 326 each coordinate 1D-myo-inositol hexakisphosphate. Positions 318–418 are interaction with TRAF6; the sequence is IVSYKVKVKL…GTGSPQLNNR (101 aa). Positions 353–375 are disordered; that stretch reads HPKPKEEPPHREVPENETPVDTN. A compositionally biased stretch (basic and acidic residues) spans 355-366; sequence KPKEEPPHREVP. Residues 385 to 395 carry the [DE]-X(1,2)-F-X-X-[FL]-X-X-X-R motif motif; sequence DIVFEDFARQR. Positions 397-418 are disordered; it reads KGMKDDKEEEEDGTGSPQLNNR. The residue at position 412 (S412) is a Phosphoserine; by GRK5.

This sequence belongs to the arrestin family. As to quaternary structure, monomer. Homodimer. Homooligomer; the self-association is mediated by InsP6-binding. Heterooligomer with ARRB2; the association is mediated by InsP6-binding. Interacts with GPR143. Interacts with ADRB2 (phosphorylated). Interacts with CHRM2 (phosphorylated). Interacts with LHCGR. Interacts with CYTH2 and CASR. Interacts with AP2B1 (dephosphorylated at 'Tyr-737'); phosphorylation of AP2B1 at 'Tyr-737' disrupts the interaction. Interacts (dephosphorylated at Ser-412) with CLTC. Interacts with CCR2 and GRK2. Interacts with CRR5. Interacts with PTAFR (phosphorylated on serine residues). Interacts with CLTC and MAP2K3. Interacts with CREB1. Interacts with TRAF6. Interacts with IGF1R and MDM2. Interacts with C5AR1. Interacts with PDE4D. Interacts with SRC (via the SH3 domain and the protein kinase domain); the interaction is independent of the phosphorylation state of SRC C-terminus. Interacts with TACR1. Interacts with RAF1. Interacts with CHUK, IKBKB and MAP3K14. Interacts with DVL1; the interaction is enhanced by phosphorylation of DVL1. Interacts with DVL2; the interaction is enhanced by phosphorylation of DVL2. Interacts with IGF1R. Associates with MAP kinase p38. Part of a MAPK signaling complex consisting of TACR1, ARRB1, SRC, MAPK1 (activated) and MAPK3 (activated). Part of a MAPK signaling complex consisting of F2RL1, ARRB1, RAF1, MAPK1 (activated) and MAPK3 (activated). Interacts with MAP2K4/MKK4. Interacts with HCK and CXCR1 (phosphorylated). Interacts with ACKR3 and ACKR4. Interacts with ARRDC1; the interaction is direct. Interacts with GPR61, GPR62 and GPR135. In terms of processing, constitutively phosphorylated at Ser-412 in the cytoplasm. At the plasma membrane, is rapidly dephosphorylated, a process that is required for clathrin binding and ADRB2 endocytosis but not for ADRB2 binding and desensitization. Once internalized, is rephosphorylated. The ubiquitination status appears to regulate the formation and trafficking of beta-arrestin-GPCR complexes and signaling. Ubiquitination appears to occur GPCR-specific. Ubiquitinated by MDM2; the ubiquitination is required for rapid internalization of ADRB2. Deubiquitinated by USP33; the deubiquitination leads to a dissociation of the beta-arrestin-GPCR complex. Stimulation of a class A GPCR, such as ADRB2, induces transient ubiquitination and subsequently promotes association with USP33.

It is found in the cytoplasm. It localises to the nucleus. The protein resides in the cell membrane. The protein localises to the membrane. Its subcellular location is the clathrin-coated pit. It is found in the cell projection. It localises to the pseudopodium. The protein resides in the cytoplasmic vesicle. Functions in regulating agonist-mediated G-protein coupled receptor (GPCR) signaling by mediating both receptor desensitization and resensitization processes. During homologous desensitization, beta-arrestins bind to the GPRK-phosphorylated receptor and sterically preclude its coupling to the cognate G-protein; the binding appears to require additional receptor determinants exposed only in the active receptor conformation. The beta-arrestins target many receptors for internalization by acting as endocytic adapters (CLASPs, clathrin-associated sorting proteins) and recruiting the GPRCs to the adapter protein 2 complex 2 (AP-2) in clathrin-coated pits (CCPs). However, the extent of beta-arrestin involvement appears to vary significantly depending on the receptor, agonist and cell type. Internalized arrestin-receptor complexes traffic to intracellular endosomes, where they remain uncoupled from G-proteins. Two different modes of arrestin-mediated internalization occur. Class A receptors, like ADRB2, OPRM1, ENDRA, D1AR and ADRA1B dissociate from beta-arrestin at or near the plasma membrane and undergo rapid recycling. Class B receptors, like AVPR2, AGTR1, NTSR1, TRHR and TACR1 internalize as a complex with arrestin and traffic with it to endosomal vesicles, presumably as desensitized receptors, for extended periods of time. Receptor resensitization then requires that receptor-bound arrestin is removed so that the receptor can be dephosphorylated and returned to the plasma membrane. Involved in internalization of P2RY4 and UTP-stimulated internalization of P2RY2. Involved in phosphorylation-dependent internalization of OPRD1 ands subsequent recycling. Involved in the degradation of cAMP by recruiting cAMP phosphodiesterases to ligand-activated receptors. Beta-arrestins function as multivalent adapter proteins that can switch the GPCR from a G-protein signaling mode that transmits short-lived signals from the plasma membrane via small molecule second messengers and ion channels to a beta-arrestin signaling mode that transmits a distinct set of signals that are initiated as the receptor internalizes and transits the intracellular compartment. Acts as a signaling scaffold for MAPK pathways such as MAPK1/3 (ERK1/2). ERK1/2 activated by the beta-arrestin scaffold is largely excluded from the nucleus and confined to cytoplasmic locations such as endocytic vesicles, also called beta-arrestin signalosomes. Recruits c-Src/SRC to ADRB2 resulting in ERK activation. GPCRs for which the beta-arrestin-mediated signaling relies on both ARRB1 and ARRB2 (codependent regulation) include ADRB2, F2RL1 and PTH1R. For some GPCRs the beta-arrestin-mediated signaling relies on either ARRB1 or ARRB2 and is inhibited by the other respective beta-arrestin form (reciprocal regulation). Inhibits ERK1/2 signaling in AGTR1- and AVPR2-mediated activation (reciprocal regulation). Is required for SP-stimulated endocytosis of NK1R and recruits c-Src/SRC to internalized NK1R resulting in ERK1/2 activation, which is required for the antiapoptotic effects of SP. Is involved in proteinase-activated F2RL1-mediated ERK activity. Acts as a signaling scaffold for the AKT1 pathway. Is involved in alpha-thrombin-stimulated AKT1 signaling. Is involved in IGF1-stimulated AKT1 signaling leading to increased protection from apoptosis. Involved in activation of the p38 MAPK signaling pathway and in actin bundle formation. Involved in F2RL1-mediated cytoskeletal rearrangement and chemotaxis. Involved in AGTR1-mediated stress fiber formation by acting together with GNAQ to activate RHOA. Appears to function as signaling scaffold involved in regulation of MIP-1-beta-stimulated CCR5-dependent chemotaxis. Involved in attenuation of NF-kappa-B-dependent transcription in response to GPCR or cytokine stimulation by interacting with and stabilizing CHUK. May serve as nuclear messenger for GPCRs. Involved in OPRD1-stimulated transcriptional regulation by translocating to CDKN1B and FOS promoter regions and recruiting EP300 resulting in acetylation of histone H4. Involved in regulation of LEF1 transcriptional activity via interaction with DVL1 and/or DVL2 Also involved in regulation of receptors other than GPCRs. Involved in Toll-like receptor and IL-1 receptor signaling through the interaction with TRAF6 which prevents TRAF6 autoubiquitination and oligomerization required for activation of NF-kappa-B and JUN. Binds phosphoinositides. Binds inositolhexakisphosphate (InsP6). Involved in IL8-mediated granule release in neutrophils. Required for atypical chemokine receptor ACKR2-induced RAC1-LIMK1-PAK1-dependent phosphorylation of cofilin (CFL1) and for the up-regulation of ACKR2 from endosomal compartment to cell membrane, increasing its efficiency in chemokine uptake and degradation. Involved in the internalization of the atypical chemokine receptor ACKR3. Negatively regulates the NOTCH signaling pathway by mediating the ubiquitination and degradation of NOTCH1 by ITCH. Participates in the recruitment of the ubiquitin-protein ligase to the receptor. The chain is Beta-arrestin-1 (ARRB1) from Homo sapiens (Human).